The primary structure comprises 521 residues: NAD(P)H-quinone oxidoreductase subunit 2 (521 aa).

The next 14 helical transmembrane spans lie at 16 to 36 (ILPE…DLIG), 43 to 63 (WLPY…YTAW), 80 to 100 (LSIV…LMSI), 110 to 130 (LAEF…LSGA), 133 to 153 (LVMI…MTGY), 168 to 188 (LLIG…LYGL), 211 to 231 (LGLA…ISAV), 245 to 265 (PTPV…ALAI), 279 to 299 (WHLI…VVAL), 307 to 327 (MLAY…TAGT), 335 to 355 (VFYL…VILF), 379 to 399 (LGLS…GFFG), 401 to 421 (IYLF…LALV), and 467 to 487 (VGLV…NPLF).

This sequence belongs to the complex I subunit 2 family. NDH-1 can be composed of about 15 different subunits; different subcomplexes with different compositions have been identified which probably have different functions.

The protein resides in the cellular thylakoid membrane. The catalysed reaction is a plastoquinone + NADH + (n+1) H(+)(in) = a plastoquinol + NAD(+) + n H(+)(out). It carries out the reaction a plastoquinone + NADPH + (n+1) H(+)(in) = a plastoquinol + NADP(+) + n H(+)(out). Its function is as follows. NDH-1 shuttles electrons from an unknown electron donor, via FMN and iron-sulfur (Fe-S) centers, to quinones in the respiratory and/or the photosynthetic chain. The immediate electron acceptor for the enzyme in this species is believed to be plastoquinone. Couples the redox reaction to proton translocation, and thus conserves the redox energy in a proton gradient. Cyanobacterial NDH-1 also plays a role in inorganic carbon-concentration. The chain is NAD(P)H-quinone oxidoreductase subunit 2 from Crocosphaera subtropica (strain ATCC 51142 / BH68) (Cyanothece sp. (strain ATCC 51142)).